The chain runs to 404 residues: MKLPIYFDYSATCPVDPRVAEKMMQCLTMDGNFGNPASRSHRFGWQAEEAVDTAREQVADLMNADPREIVFTSGATESDNLAIKGAARFYSKKGKHIITCKTEHKAVLDPCRQLEREGFEVTYLDPEANGLIDMAKLRDAIREDTVLMSIMHVNNEIGVIQDITAIGELCRENKIVFHVDAAQSIGKLPIDVQAMKVDLISVTSHKIYGPKGIGALYVRRKPRIRLEAQMHGGGHERGMRSGTLATHQIVGMGEAFRIAKEEMEQDRVHTLALRTRLLDGLKDMESVHINGDLEQRVSSNLNISFAFVEGESLLMALKDLAVSSGSACTSASLEPSYVLRALGLDDELAHSSIRFSFGRFSTEEEIDYAITQIRTAVEKLRDMSPLWDMHKEGIDLNSVEWAHH.

Residues 75-76, Asn155, Gln183, and 203-205 each bind pyridoxal 5'-phosphate; these read AT and TSH. Residue Lys206 is modified to N6-(pyridoxal phosphate)lysine. A pyridoxal 5'-phosphate-binding site is contributed by Thr243. Cys328 acts as the Cysteine persulfide intermediate in catalysis. Cys328 serves as a coordination point for [2Fe-2S] cluster.

It belongs to the class-V pyridoxal-phosphate-dependent aminotransferase family. NifS/IscS subfamily. Homodimer. Forms a heterotetramer with IscU, interacts with other sulfur acceptors. Requires pyridoxal 5'-phosphate as cofactor.

Its subcellular location is the cytoplasm. The catalysed reaction is (sulfur carrier)-H + L-cysteine = (sulfur carrier)-SH + L-alanine. It participates in cofactor biosynthesis; iron-sulfur cluster biosynthesis. Functionally, master enzyme that delivers sulfur to a number of partners involved in Fe-S cluster assembly, tRNA modification or cofactor biosynthesis. Catalyzes the removal of elemental sulfur atoms from cysteine to produce alanine. Functions as a sulfur delivery protein for Fe-S cluster synthesis onto IscU, an Fe-S scaffold assembly protein, as well as other S acceptor proteins. This chain is Cysteine desulfurase IscS, found in Photobacterium profundum (strain SS9).